Consider the following 614-residue polypeptide: UvrABC system protein C (614 aa).

Positions 26-104 (NLPGVYKMLG…IKEYRPPYNV (79 aa)) constitute a GIY-YIG domain. The 36-residue stretch at 215–250 (SDIHTALIEKMEASAEELDFEKAVFYRDQLSMLREV) folds into the UVR domain.

Belongs to the UvrC family. Interacts with UvrB in an incision complex.

The protein localises to the cytoplasm. Functionally, the UvrABC repair system catalyzes the recognition and processing of DNA lesions. UvrC both incises the 5' and 3' sides of the lesion. The N-terminal half is responsible for the 3' incision and the C-terminal half is responsible for the 5' incision. The sequence is that of UvrABC system protein C from Psychrobacter cryohalolentis (strain ATCC BAA-1226 / DSM 17306 / VKM B-2378 / K5).